The following is a 403-amino-acid chain: Keratin, type I cytoskeletal 19 (403 aa).

The interval 1-82 (MTSYSYRQSS…TVTDGLLGGN (82 aa)) is head. R7 carries the post-translational modification Omega-N-methylarginine. S14 is modified (phosphoserine). R24 bears the Asymmetric dimethylarginine; alternate mark. R24 carries the omega-N-methylarginine; alternate modification. The residue at position 27 (S27) is a Phosphoserine. R32 is modified (omega-N-methylarginine). S35 and S40 each carry phosphoserine. 2 positions are modified to omega-N-methylarginine: R43 and R51. Phosphoserine occurs at positions 57 and 67. Residues 83–118 (EKITMQNLNDRLASYLDKVRALEQANGELEVKIRDW) form a coil 1A region. The IF rod domain maps to 83–394 (EKITMQNLND…SLLEGQEAHY (312 aa)). Residues 119-136 (YQKQGPGPFRDYSQYFKT) form a linker 1 region. The interval 137–228 (IEDLRDKILG…KNHEEEISAL (92 aa)) is coil 1B. The segment at 229–251 (RSQVGGQVSVEVDSTPGIDLAKI) is linker 12. Residues 247–393 (DLAKILSEMR…RSLLEGQEAH (147 aa)) form a necessary for interaction with PNN region. Positions 252 to 390 (LSEMRSQYEA…ATYRSLLEGQ (139 aa)) are coil 2. Residue T326 is modified to Phosphothreonine. A rod-like helical tail region spans residues 391-403 (EAHYNSLSIAKAL). Phosphotyrosine is present on Y394. Position 398 is a phosphoserine (S398).

The protein belongs to the intermediate filament family. As to quaternary structure, heterotetramer of two type I and two type II keratins. Interacts with PNN. Interacts with the actin-binding domain of DMD. In terms of tissue distribution, expressed in brain, heart, skin and in costameres of myoplasm at the sarcolemmal membrane in skeletal and cardiac muscle fibers. Undifferentiated gonads and somatic cells of ovarian cords throughout the fetal ovary development.

Involved in the organization of myofibers. Together with KRT8, helps to link the contractile apparatus to dystrophin at the costameres of striated muscle. This chain is Keratin, type I cytoskeletal 19 (Krt19), found in Rattus norvegicus (Rat).